Reading from the N-terminus, the 322-residue chain is tRNA U34 carboxymethyltransferase (322 aa).

Residues Lys-91, Trp-105, Lys-110, Gly-129, 179–180 (LE), Met-195, Tyr-199, and Arg-314 contribute to the carboxy-S-adenosyl-L-methionine site.

Belongs to the class I-like SAM-binding methyltransferase superfamily. CmoB family. In terms of assembly, homotetramer.

It carries out the reaction carboxy-S-adenosyl-L-methionine + 5-hydroxyuridine(34) in tRNA = 5-carboxymethoxyuridine(34) in tRNA + S-adenosyl-L-homocysteine + H(+). Catalyzes carboxymethyl transfer from carboxy-S-adenosyl-L-methionine (Cx-SAM) to 5-hydroxyuridine (ho5U) to form 5-carboxymethoxyuridine (cmo5U) at position 34 in tRNAs. The chain is tRNA U34 carboxymethyltransferase from Pseudomonas aeruginosa (strain ATCC 15692 / DSM 22644 / CIP 104116 / JCM 14847 / LMG 12228 / 1C / PRS 101 / PAO1).